Consider the following 100-residue polypeptide: Co-chaperonin GroES (100 aa).

It belongs to the GroES chaperonin family. As to quaternary structure, heptamer of 7 subunits arranged in a ring. Interacts with the chaperonin GroEL.

Its subcellular location is the cytoplasm. Together with the chaperonin GroEL, plays an essential role in assisting protein folding. The GroEL-GroES system forms a nano-cage that allows encapsulation of the non-native substrate proteins and provides a physical environment optimized to promote and accelerate protein folding. GroES binds to the apical surface of the GroEL ring, thereby capping the opening of the GroEL channel. The chain is Co-chaperonin GroES from Rhodothermus marinus (Rhodothermus obamensis).